A 198-amino-acid polypeptide reads, in one-letter code: Dual specificity protein phosphatase 1 (198 aa).

The disordered stretch occupies residues 1 to 20 (MSSRDRGSPSSSSSSSSLPG). Residues 8 to 17 (SPSSSSSSSS) are compositionally biased toward low complexity. The tract at residues 26-47 (EKVKNQIQALVRVIKVARTYRD) is caM binding domain 1. The Tyrosine-protein phosphatase domain occupies 50–191 (VPSLIEQGLY…LQDLEKSMQV (142 aa)). Cysteine 135 serves as the catalytic Phosphocysteine intermediate. The caM binding domain 2 stretch occupies residues 151–180 (MKKHGMTLAQALQHVKSKRPVASPNAGFIR).

The protein belongs to the protein-tyrosine phosphatase family. Non-receptor class dual specificity subfamily. As to quaternary structure, interacts with calmodulin (CaM) in a calcium Ca(2+)-dependent manner. Expressed in roots, stems, leaves and flowers.

Its subcellular location is the nucleus. The protein resides in the cytoplasm. The enzyme catalyses O-phospho-L-tyrosyl-[protein] + H2O = L-tyrosyl-[protein] + phosphate. The catalysed reaction is O-phospho-L-seryl-[protein] + H2O = L-seryl-[protein] + phosphate. It catalyses the reaction O-phospho-L-threonyl-[protein] + H2O = L-threonyl-[protein] + phosphate. Inhibited by sodium vanadate and sodium tungstate. NaF and spermifine repress specifically phosphoserine and phosphothreonine phosphatase activity. In terms of biological role, has a dual specificity toward Ser/Thr and Tyr-containing proteins. Dephosphorylates MPK4 in vitro. This is Dual specificity protein phosphatase 1 (DSPTP1) from Arabidopsis thaliana (Mouse-ear cress).